The sequence spans 422 residues: MMTTLTATVPEFLPPSLKSTRGYFNSHSEFGVSISKFSRRRFHNPTRVFAVSDISKLVTEFDPKIPLERASTPPSSWYTDPQFYSFELDRVFYGGWQAVGYSDQIKESRDFFTGRLGDVDFVVCRDENGKIHAFHNVCSHHASILASGNGRKSCFVCLYHGWTYSLSGSLVKATRMSGIQNFSLSEMGLKPLRVAVWGPFVLLKVTAATSRKGEVETDELVASEWLGTSVGRLSQGGVDSPLSYICRREYTIDCNWKVFCDNYLDGGYHVPYAHKGLMSGLDLETYSTTIFEKVSIQECGGGSKVGEDGFDRLGSEALYAFVYPNFMINRYGPWMDTNLVLPLGPRKCKVVFDYFLDPSLKDDEAFIKRSLEESDRVQMEDVMLCESVQRGLESQAYDKGRYALVEKPMHHFHCLLHHNLKL.

The transit peptide at 1–47 directs the protein to the chloroplast; sequence MMTTLTATVPEFLPPSLKSTRGYFNSHSEFGVSISKFSRRRFHNPTR. Positions 96–203 constitute a Rieske domain; it reads WQAVGYSDQI…VAVWGPFVLL (108 aa). The [2Fe-2S] cluster site is built by C138, H140, C157, and H160. H269 and H274 together coordinate Fe cation.

This sequence belongs to the choline monooxygenase family. It depends on [2Fe-2S] cluster as a cofactor. Fe cation serves as cofactor. Mg(2+) is required as a cofactor.

Its subcellular location is the plastid. It is found in the chloroplast stroma. The catalysed reaction is choline + 2 reduced [2Fe-2S]-[ferredoxin] + O2 + 2 H(+) = betaine aldehyde hydrate + 2 oxidized [2Fe-2S]-[ferredoxin] + H2O. The protein operates within amine and polyamine biosynthesis; betaine biosynthesis via choline pathway; betaine aldehyde from choline (monooxygenase route): step 1/1. Its function is as follows. Catalyzes the first step of the osmoprotectant glycine betaine synthesis. The chain is Choline monooxygenase, chloroplastic from Arabidopsis thaliana (Mouse-ear cress).